Reading from the N-terminus, the 466-residue chain is 3-isopropylmalate dehydratase large subunit (466 aa).

3 residues coordinate [4Fe-4S] cluster: Cys-347, Cys-407, and Cys-410.

Belongs to the aconitase/IPM isomerase family. LeuC type 1 subfamily. As to quaternary structure, heterodimer of LeuC and LeuD. The cofactor is [4Fe-4S] cluster.

The enzyme catalyses (2R,3S)-3-isopropylmalate = (2S)-2-isopropylmalate. Its pathway is amino-acid biosynthesis; L-leucine biosynthesis; L-leucine from 3-methyl-2-oxobutanoate: step 2/4. Its function is as follows. Catalyzes the isomerization between 2-isopropylmalate and 3-isopropylmalate, via the formation of 2-isopropylmaleate. This chain is 3-isopropylmalate dehydratase large subunit, found in Shigella flexneri serotype 5b (strain 8401).